The following is a 378-amino-acid chain: Ribosomal RNA large subunit methyltransferase G (378 aa).

It belongs to the methyltransferase superfamily. RlmG family.

Its subcellular location is the cytoplasm. It carries out the reaction guanosine(1835) in 23S rRNA + S-adenosyl-L-methionine = N(2)-methylguanosine(1835) in 23S rRNA + S-adenosyl-L-homocysteine + H(+). Specifically methylates the guanine in position 1835 (m2G1835) of 23S rRNA. The polypeptide is Ribosomal RNA large subunit methyltransferase G (Escherichia coli O1:K1 / APEC).